The following is a 446-amino-acid chain: ATP-dependent protease ATPase subunit HslU (446 aa).

Residues valine 17, 59–64 (GVGKTE), aspartate 255, glutamate 320, and arginine 392 contribute to the ATP site.

The protein belongs to the ClpX chaperone family. HslU subfamily. In terms of assembly, a double ring-shaped homohexamer of HslV is capped on each side by a ring-shaped HslU homohexamer. The assembly of the HslU/HslV complex is dependent on binding of ATP.

Its subcellular location is the cytoplasm. Functionally, ATPase subunit of a proteasome-like degradation complex; this subunit has chaperone activity. The binding of ATP and its subsequent hydrolysis by HslU are essential for unfolding of protein substrates subsequently hydrolyzed by HslV. HslU recognizes the N-terminal part of its protein substrates and unfolds these before they are guided to HslV for hydrolysis. This is ATP-dependent protease ATPase subunit HslU from Azotobacter vinelandii (strain DJ / ATCC BAA-1303).